Consider the following 412-residue polypeptide: Probable tRNA pseudouridine synthase D (412 aa).

The active-site Nucleophile is the aspartate 97. Positions 167-370 (ALPNYYGYQR…YGSYRRARLQ (204 aa)) constitute a TRUD domain.

Belongs to the pseudouridine synthase TruD family.

The enzyme catalyses uridine(13) in tRNA = pseudouridine(13) in tRNA. In terms of biological role, could be responsible for synthesis of pseudouridine from uracil-13 in transfer RNAs. This chain is Probable tRNA pseudouridine synthase D, found in Pyrobaculum neutrophilum (strain DSM 2338 / JCM 9278 / NBRC 100436 / V24Sta) (Thermoproteus neutrophilus).